The sequence spans 357 residues: Dihydroorotate dehydrogenase (quinone) (357 aa).

Residues 66 to 70 (AGFDK) and Thr-90 contribute to the FMN site. A substrate-binding site is contributed by Lys-70. Substrate is bound at residue 115 to 119 (NRMGF). Residues Asn-143 and Asn-176 each contribute to the FMN site. Residue Asn-176 coordinates substrate. Ser-179 (nucleophile) is an active-site residue. Substrate is bound at residue Asn-181. FMN-binding residues include Lys-212 and Thr-240. 241-242 (NT) is a substrate binding site. Residues Gly-264, Gly-293, and 314–315 (YT) each bind FMN.

This sequence belongs to the dihydroorotate dehydrogenase family. Type 2 subfamily. Monomer. It depends on FMN as a cofactor.

The protein localises to the cell membrane. It catalyses the reaction (S)-dihydroorotate + a quinone = orotate + a quinol. The protein operates within pyrimidine metabolism; UMP biosynthesis via de novo pathway; orotate from (S)-dihydroorotate (quinone route): step 1/1. In terms of biological role, catalyzes the conversion of dihydroorotate to orotate with quinone as electron acceptor. The sequence is that of Dihydroorotate dehydrogenase (quinone) from Mycobacterium bovis (strain BCG / Pasteur 1173P2).